Here is a 276-residue protein sequence, read N- to C-terminus: CDP-diacylglycerol--serine O-phosphatidyltransferase (276 aa).

The tract at residues 1–21 (MVESDEDFAPQEFPHTDTDVI) is disordered. Residues Ser-4, Ser-34, Ser-42, Ser-46, Ser-47, and Ser-50 each carry the phosphoserine modification. 4 helical membrane passes run 82–102 (MADYITMLNGFSGFYSIVSCL), 163–183 (IAFAIGFQTTFDVMILSFFVL), 210–230 (YFEGLPMPTTLALVLGMAYCV), and 248–268 (QILEFHPIILVFFIHGCGMIS).

This sequence belongs to the CDP-alcohol phosphatidyltransferase class-I family. Mn(2+) serves as cofactor. Mg(2+) is required as a cofactor.

It is found in the microsome membrane. It localises to the endoplasmic reticulum membrane. Its subcellular location is the mitochondrion outer membrane. The catalysed reaction is a CDP-1,2-diacyl-sn-glycerol + L-serine = a 1,2-diacyl-sn-glycero-3-phospho-L-serine + CMP + H(+). The protein operates within phospholipid metabolism; phosphatidylethanolamine biosynthesis; phosphatidylethanolamine from CDP-diacylglycerol: step 1/2. Its function is as follows. Catalyzes the synthesis of phosphatidylserine (PtdSer). The sequence is that of CDP-diacylglycerol--serine O-phosphatidyltransferase (CHO1) from Saccharomyces cerevisiae (strain ATCC 204508 / S288c) (Baker's yeast).